Here is a 409-residue protein sequence, read N- to C-terminus: Putative lipoate-protein ligase A (409 aa).

In terms of domain architecture, BPL/LPL catalytic spans Gly146–Gly330. ATP is bound by residues Arg188, Gly193–Leu196, and Lys249. Lys249 contributes to the (R)-lipoate binding site.

The protein belongs to the LplA family. In terms of assembly, monomer.

The catalysed reaction is L-lysyl-[lipoyl-carrier protein] + (R)-lipoate + ATP = N(6)-[(R)-lipoyl]-L-lysyl-[lipoyl-carrier protein] + AMP + diphosphate + H(+). It functions in the pathway protein modification; protein lipoylation via exogenous pathway; protein N(6)-(lipoyl)lysine from lipoate: step 1/2. Its pathway is protein modification; protein lipoylation via exogenous pathway; protein N(6)-(lipoyl)lysine from lipoate: step 2/2. In terms of biological role, catalyzes both the ATP-dependent activation of exogenously supplied lipoate to lipoyl-AMP and the transfer of the activated lipoyl onto the lipoyl domains of lipoate-dependent enzymes. In Saccharomyces cerevisiae (strain RM11-1a) (Baker's yeast), this protein is Putative lipoate-protein ligase A (AIM22).